The chain runs to 517 residues: GMP synthase [glutamine-hydrolyzing] (517 aa).

A Glutamine amidotransferase type-1 domain is found at 11-202 (KIIVLDFGSQ…AFNVCDAKAN (192 aa)). The Nucleophile role is filled by Cys-88. Catalysis depends on residues His-176 and Glu-178. One can recognise a GMPS ATP-PPase domain in the interval 203–392 (WTMDDFIEMQ…LGIPHDLVWR (190 aa)). 230–236 (SGGVDSS) is a binding site for ATP.

Homodimer.

It catalyses the reaction XMP + L-glutamine + ATP + H2O = GMP + L-glutamate + AMP + diphosphate + 2 H(+). The protein operates within purine metabolism; GMP biosynthesis; GMP from XMP (L-Gln route): step 1/1. Functionally, catalyzes the synthesis of GMP from XMP. This is GMP synthase [glutamine-hydrolyzing] from Lactobacillus gasseri (strain ATCC 33323 / DSM 20243 / BCRC 14619 / CIP 102991 / JCM 1131 / KCTC 3163 / NCIMB 11718 / NCTC 13722 / AM63).